Consider the following 210-residue polypeptide: Somatotropin (210 aa).

The signal sequence occupies residues 1-22 (MGQVFLLMPVLLVSCFLSQGAA). His-38 contacts Zn(2+). An intrachain disulfide couples Cys-71 to Cys-183. Glu-192 provides a ligand contact to Zn(2+). Cys-200 and Cys-208 are joined by a disulfide.

Belongs to the somatotropin/prolactin family.

The protein localises to the secreted. Functionally, growth hormone plays an important role in growth control and is involved in the regulation of several anabolic processes. Implicated as an osmoregulatory substance important for seawater adaptation. The chain is Somatotropin (gh) from Oncorhynchus keta (Chum salmon).